Consider the following 367-residue polypeptide: MKLLTALSELISIFLFTTIFIFLARKVAIKIGLVDKPNFRKRHQGVIPLVGGISVFAGICFMFGLSDYYIPHLSLYLICAGVLVFVGAMDDRFDISVKIRAVVQAVIAVVMMVIAKLHLGSLGYIFGPWELVLGPFGYFLTLFAVWAAINAFNMVDGIDGLLGGLSSVSFAAMGLILWFDGQTSLAMWCFAMIAAILPYIMLNLGILGRRYKVFMGDAGSTLIGFTVIWLLLETTQGKTHSISPVTALWIIAIPLMDMVAIMYRRLRKGMSPFSPDRQHIHHLVMRAGFTSRQAFVLITLAAAILAGVGVTAEYSHFVPEWVMLVLFLLAFFLYGYCIKRAWKVARFIKRVKRRLRRQRKNRPNLTK.

9 consecutive transmembrane segments (helical) span residues 3–23 (LLTA…FIFL), 45–65 (GVIP…MFGL), 69–89 (YIPH…VGAM), 129–149 (WELV…WAAI), 158–178 (IDGL…LILW), 187–207 (MWCF…LGIL), 213–233 (VFMG…LLLE), 242–262 (ISPV…VAIM), and 318–338 (VPEW…GYCI).

It belongs to the glycosyltransferase 4 family. WecA subfamily. Mg(2+) is required as a cofactor. It depends on Mn(2+) as a cofactor.

It localises to the cell inner membrane. The catalysed reaction is di-trans,octa-cis-undecaprenyl phosphate + UDP-N-acetyl-alpha-D-glucosamine = N-acetyl-alpha-D-glucosaminyl-di-trans,octa-cis-undecaprenyl diphosphate + UMP. The protein operates within bacterial outer membrane biogenesis; LPS O-antigen biosynthesis. It participates in bacterial outer membrane biogenesis; enterobacterial common antigen biosynthesis. In terms of biological role, catalyzes the transfer of the GlcNAc-1-phosphate moiety from UDP-GlcNAc onto the carrier lipid undecaprenyl phosphate (C55-P), yielding GlcNAc-pyrophosphoryl-undecaprenyl (GlcNAc-PP-C55). The chain is Undecaprenyl-phosphate alpha-N-acetylglucosaminyl 1-phosphate transferase from Salmonella typhi.